The primary structure comprises 233 residues: Large ribosomal subunit protein uL22m (233 aa).

It belongs to the universal ribosomal protein uL22 family. As to quaternary structure, component of the mitochondrial ribosome large subunit (39S) which comprises a 16S rRNA and about 50 distinct proteins.

The protein resides in the mitochondrion. This chain is Large ribosomal subunit protein uL22m (mRpL22), found in Drosophila melanogaster (Fruit fly).